We begin with the raw amino-acid sequence, 941 residues long: Protocadherin alpha-12 (941 aa).

An N-terminal signal peptide occupies residues 1–29 (MVIIGPRGPGSQRLLLSLLLLAAWEVGSG). Cadherin domains are found at residues 30–133 (QLHY…PPVF), 134–242 (RERE…GPAF), 243–350 (DKPS…VPEV), 351–455 (MVTS…APAF), 456–565 (AQPE…APAL), and 581–678 (VPRS…APKT). The Extracellular portion of the chain corresponds to 30-697 (QLHYSVYEEA…DPEAALVDIN (668 aa)). 2 N-linked (GlcNAc...) asparagine glycosylation sites follow: N257 and N265. N548 carries N-linked (GlcNAc...) asparagine glycosylation. The chain crosses the membrane as a helical span at residues 698-718 (VYLIIAICAVSSLLVLTLLLY). At 719–941 (TALRCSAPPT…GNSTTDNSDQ (223 aa)) the chain is on the cytoplasmic side. 5 PXXP repeats span residues 734–737 (PGKP), 790–793 (PRQP), 823–826 (PGGP), 863–866 (GPGN), and 882–885 (PGSP). Residues 734–885 (PGKPTLVCSS…PDKFIIPGSP (152 aa)) form a 5 X 4 AA repeats of P-X-X-P region. The interval 818–941 (ILRAGPGGPD…GNSTTDNSDQ (124 aa)) is disordered. The span at 900-914 (DKSDFITFGKKEETK) shows a compositional bias: basic and acidic residues.

It is found in the cell membrane. Functionally, potential calcium-dependent cell-adhesion protein. May be involved in the establishment and maintenance of specific neuronal connections in the brain. This Pan troglodytes (Chimpanzee) protein is Protocadherin alpha-12 (PCDHA12).